The chain runs to 352 residues: N-acetyl-gamma-glutamyl-phosphate reductase (352 aa).

Cys-156 is a catalytic residue.

It belongs to the NAGSA dehydrogenase family. Type 1 subfamily.

Its subcellular location is the cytoplasm. The enzyme catalyses N-acetyl-L-glutamate 5-semialdehyde + phosphate + NADP(+) = N-acetyl-L-glutamyl 5-phosphate + NADPH + H(+). Its pathway is amino-acid biosynthesis; L-arginine biosynthesis; N(2)-acetyl-L-ornithine from L-glutamate: step 3/4. Functionally, catalyzes the NADPH-dependent reduction of N-acetyl-5-glutamyl phosphate to yield N-acetyl-L-glutamate 5-semialdehyde. This Afipia carboxidovorans (strain ATCC 49405 / DSM 1227 / KCTC 32145 / OM5) (Oligotropha carboxidovorans) protein is N-acetyl-gamma-glutamyl-phosphate reductase.